A 379-amino-acid polypeptide reads, in one-letter code: Cyclin-dependent kinase-like 4 (379 aa).

A Protein kinase domain is found at 4–286 (YEKLAKTGEG…CSQLLESSYF (283 aa)). Residues 10 to 18 (TGEGSYGVV) and lysine 33 each bind ATP. The [NKR]KIAxRE motif lies at 45–51 (KKIALRE). The active-site Proton acceptor is aspartate 126.

The protein belongs to the protein kinase superfamily. CMGC Ser/Thr protein kinase family. CDC2/CDKX subfamily.

The protein localises to the cytoplasm. It carries out the reaction L-seryl-[protein] + ATP = O-phospho-L-seryl-[protein] + ADP + H(+). It catalyses the reaction L-threonyl-[protein] + ATP = O-phospho-L-threonyl-[protein] + ADP + H(+). This is Cyclin-dependent kinase-like 4 (CDKL4) from Homo sapiens (Human).